A 720-amino-acid polypeptide reads, in one-letter code: MNNHVSSTPSTMKLKQTIHPILLYFIHFIISLYTILTYIPFYFLCESKQEKPNHIKAKPVSSKPDSAYRSVNSMDGLASVLYPGCDTLDKVFMYAKNKFKDKRLLGTREILNEEDEIQPNGKVFKKVILGHYNWLSYEDVFIRALDFGNGLQMLGQKPKANIAIFCETRAEWMIAAQACFMYNFQLVTLYATLGGPAIVHGLNETEVTNIITSKELLQTKLKDIVSLVPRLRHIITVDGKPPTWSEFPKGVIVHTMAAVQALGVKADVDKKAHSKPLPSDIAVIMYTSGSTGIPKGVMISHSNIIASITGMARRIPRLGEEDVYIGYLPLAHVLELSAELVCLSHGCRIGYSSPQTLADQSSKIKKGSKGDTSVLKPTLMAAVPEIMDRIYKNVMNKVNEMSAFQRNLFILAYNYKMEQISKGCSTPLCDRFVFRNVRRLLGGNIRVLLCGGAPLSATTQRFMNICFCCPVGQGYGLTESTGAGTITEVWDYNTGRVGAPLVCCEIKLKNWEEGGYFNTDKPHPRGEILIGGQNVTMGYYKNEAKTKADFFEDENGQRWLCTGDIGEFDPDGCLKIIDRKKDLVKLQAGEYVSLGKVEAALKNLPLIDNICAYANSYHSYVIGFVVPNQKELTELARTKGFNGTWEELCNSSEMENEVLKVLSEAAISASLEKFEIPLKIRLSPDPWTPETGLVTDAFKLKRKELKTHYQADIERMYGRK.

A helical; Signal-anchor for type III membrane protein transmembrane segment spans residues 21–41; it reads ILLYFIHFIISLYTILTYIPF. Residues 42–720 are Cytoplasmic-facing; sequence YFLCESKQEK…ADIERMYGRK (679 aa). Serine 683 is subject to Phosphoserine.

This sequence belongs to the ATP-dependent AMP-binding enzyme family. It depends on Mg(2+) as a cofactor. Predominantly expressed in the brain, and to a much lesser extent, in lung, adrenal gland, kidney, small intestine, and adipose tissue but not detected in heart or liver.

The protein resides in the mitochondrion outer membrane. Its subcellular location is the peroxisome membrane. The protein localises to the microsome membrane. It localises to the endoplasmic reticulum membrane. The enzyme catalyses a long-chain fatty acid + ATP + CoA = a long-chain fatty acyl-CoA + AMP + diphosphate. It carries out the reaction (5Z,8Z,11Z,14Z)-eicosatetraenoate + ATP + CoA = (5Z,8Z,11Z,14Z)-eicosatetraenoyl-CoA + AMP + diphosphate. It catalyses the reaction a medium-chain fatty acid + ATP + CoA = a medium-chain fatty acyl-CoA + AMP + diphosphate. The catalysed reaction is 15-hydroxy-(5Z,8Z,11Z,13E)-eicosatetraenoate + ATP + CoA = 15-hydroxy-(5Z,8Z,11Z,13E)-eicosatetraenoyl-CoA + AMP + diphosphate. The enzyme catalyses 12-hydroxy-(5Z,8Z,10E,14Z)-eicosatetraenoate + ATP + CoA = 12-hydroxy-(5Z,8Z,10E,14Z)-eicosatetraenoyl-CoA + AMP + diphosphate. It carries out the reaction 5-hydroxy-(6E,8Z,11Z,14Z)-eicosatetraenoate + ATP + CoA = 5-hydroxy-(6E,8Z,11Z,14Z)-eicosatetraenoyl-CoA + AMP + diphosphate. It catalyses the reaction 14,15-epoxy-(5Z,8Z,11Z)-eicosatrienoate + ATP + CoA = 14,15-epoxy-(5Z,8Z,11Z)-eicosatrienoyl-CoA + AMP + diphosphate. The catalysed reaction is 11,12-epoxy-(5Z,8Z,14Z)-eicosatrienoate + ATP + CoA = 11,12-epoxy-(5Z,8Z,14Z)-eicosatrienoyl-CoA + AMP + diphosphate. The enzyme catalyses (E)-hexadec-2-enoate + ATP + CoA = (2E)-hexadecenoyl-CoA + AMP + diphosphate. It carries out the reaction hexadecanoate + ATP + CoA = hexadecanoyl-CoA + AMP + diphosphate. It catalyses the reaction tetradecanoate + ATP + CoA = tetradecanoyl-CoA + AMP + diphosphate. The catalysed reaction is dodecanoate + ATP + CoA = dodecanoyl-CoA + AMP + diphosphate. The enzyme catalyses octadecanoate + ATP + CoA = octadecanoyl-CoA + AMP + diphosphate. It carries out the reaction eicosanoate + ATP + CoA = eicosanoyl-CoA + AMP + diphosphate. It catalyses the reaction (9Z)-octadecenoate + ATP + CoA = (9Z)-octadecenoyl-CoA + AMP + diphosphate. The catalysed reaction is (9Z)-hexadecenoate + ATP + CoA = (9Z)-hexadecenoyl-CoA + AMP + diphosphate. The enzyme catalyses (9Z,12Z)-octadecadienoate + ATP + CoA = (9Z,12Z)-octadecadienoyl-CoA + AMP + diphosphate. It carries out the reaction (9Z,12Z,15Z)-octadecatrienoate + ATP + CoA = (9Z,12Z,15Z)-octadecatrienoyl-CoA + AMP + diphosphate. It catalyses the reaction (4Z,7Z,10Z,13Z,16Z,19Z)-docosahexaenoate + ATP + CoA = (4Z,7Z,10Z,13Z,16Z,19Z)-docosahexaenoyl-CoA + AMP + diphosphate. The catalysed reaction is (5Z,8Z,11Z,14Z,17Z)-eicosapentaenoate + ATP + CoA = (5Z,8Z,11Z,14Z,17Z)-eicosapentaenoyl-CoA + AMP + diphosphate. The enzyme catalyses a fatty acid + ATP + CoA = a fatty acyl-CoA + AMP + diphosphate. Functionally, catalyzes the conversion of long-chain fatty acids to their active form acyl-CoA for both synthesis of cellular lipids, and degradation via beta-oxidation. ACSL3 is required for the incorporation of fatty acids into phosphatidylcholine, the major phospholipid located on the surface of VLDL (very low density lipoproteins). Has mainly an anabolic role in energy metabolism. Mediates hepatic lipogenesis. Preferentially uses myristate, laurate, arachidonate and eicosapentaenoate as substrates. Both isoforms exhibit the same level of activity. This Rattus norvegicus (Rat) protein is Fatty acid CoA ligase Acsl3.